The sequence spans 85 residues: MKMTLIAILTCAAVLVLHTTAAEELEAESQLMEVGMPDTELAAVDEERLFECSVSCEIEKEGNKDCKKKKCKGGWKCKFNMCVKV.

A signal peptide spans 1-22 (MKMTLIAILTCAAVLVLHTTAA). A propeptide spanning residues 23–48 (EELEAESQLMEVGMPDTELAAVDEER) is cleaved from the precursor. Intrachain disulfides connect Cys52-Cys66, Cys56-Cys77, and Cys71-Cys82.

Belongs to the neurotoxin 12 (Hwtx-2) family. 02 (Hwtx-2) subfamily. As to quaternary structure, monomer. In terms of tissue distribution, expressed by the venom gland.

The protein localises to the secreted. Neurotoxin active on both insects and mammals. In Cyriopagopus hainanus (Chinese bird spider), this protein is U4-theraphotoxin-Hhn1a.